We begin with the raw amino-acid sequence, 55 residues long: MNNEDFNLDLIKISKENNSGASPRITSKSLCTPGCKTGILMTCPLKTATCGCHFG.

A propeptide spanning residues 1–24 (MNNEDFNLDLIKISKENNSGASPR) is cleaved from the precursor. At T26 the chain carries 2,3-didehydrobutyrine. Positions 27–31 (SKSLC) form a cross-link, lanthionine (Ser-Cys). S29 is modified (2,3-didehydroalanine (Ser)). 4 cross-links (beta-methyllanthionine (Thr-Cys)) span residues 32-35 (TPGC), 37-43 (TGILMTC), 47-50 (TATC), and 49-52 (TCGC). The residue at position 42 (T42) is a 2,3-didehydrobutyrine.

In terms of processing, maturation of lantibiotics involves the enzymatic conversion of Thr, and Ser into dehydrated AA and the formation of thioether bonds with cysteine. This is followed by membrane translocation and cleavage of the modified precursor.

It is found in the secreted. Functionally, lanthionine-containing peptide antibiotic (lantibiotic) active on Gram-positive bacteria. The bactericidal activity of lantibiotics is based on depolarization of energized bacterial cytoplasmic membranes, initiated by the formation of aqueous transmembrane pores. The protein is Lantibiotic nisin-U (nsuA) of Streptococcus uberis.